Here is a 498-residue protein sequence, read N- to C-terminus: ATP synthase subunit beta, chloroplastic (498 aa).

ATP is bound at residue 172-179; it reads GGAGVGKT.

This sequence belongs to the ATPase alpha/beta chains family. In terms of assembly, F-type ATPases have 2 components, CF(1) - the catalytic core - and CF(0) - the membrane proton channel. CF(1) has five subunits: alpha(3), beta(3), gamma(1), delta(1), epsilon(1). CF(0) has four main subunits: a(1), b(1), b'(1) and c(9-12).

The protein resides in the plastid. The protein localises to the chloroplast thylakoid membrane. It catalyses the reaction ATP + H2O + 4 H(+)(in) = ADP + phosphate + 5 H(+)(out). In terms of biological role, produces ATP from ADP in the presence of a proton gradient across the membrane. The catalytic sites are hosted primarily by the beta subunits. This chain is ATP synthase subunit beta, chloroplastic, found in Saruma henryi (Upright wild ginger).